A 352-amino-acid chain; its full sequence is tRNA pseudouridine synthase D (352 aa).

The Nucleophile role is filled by Asp81. The 147-residue stretch at 157-303 (GVPNYFGTQR…MDHERRILRL (147 aa)) folds into the TRUD domain.

The protein belongs to the pseudouridine synthase TruD family.

The catalysed reaction is uridine(13) in tRNA = pseudouridine(13) in tRNA. Its function is as follows. Responsible for synthesis of pseudouridine from uracil-13 in transfer RNAs. This chain is tRNA pseudouridine synthase D, found in Pseudomonas putida (strain ATCC 700007 / DSM 6899 / JCM 31910 / BCRC 17059 / LMG 24140 / F1).